A 1117-amino-acid chain; its full sequence is MKKASRSVGSVPKVSAISKTQTAEKIKPENSSSASTGGKLVKPGTAASLSKTKSSDDLLAGMAGGVTVTNGVKGKKSTCPSAAPSASAPAMTTVENKSKISTGTASSTKRSTSTGNKESSSTRERLRERTRLNQSKKLPSAGQGANDMALAKRSRSRTATECDVRMSKSKSDNQISDRAALEAKVKDLLTLAKTKDVEILHLRNELRDMRAQLGINEDHSEGDEKSEKETIMAHQPTDVESTLLQLQEQNTAIREELNQLKNENRMLKDRLNALGFSLEQRLDNSEKLFGYQSLSPEITPGNQSDGGGTLTSSVEGSAPGSVEDLLSQDENTLMDHQHSNSMDNLDSECSEVYQPLTSSDDALDAPSSSESEGIPSIERSRKGSSGNASEVSVACLTERIHQMEENQHSTSEELQATLQELADLQQITQELNSENERLGEEKVILMESLCQQSDKLEHFSRQIEYFRSLLDEHHISYVIDEDVKSGRYMELEQRYMDLAENARFEREQLLGVQQHLSNTLKMAEQDNKEAQEMIGALKERSHHMERIIESEQKGKAALAATLEEYKATVASDQIEMNRLKAQLENEKQKVAELYSIHNSGDKSDIQDLLESVRLDKEKAETLASSLQEDLAHTRNDANRLQDAIAKVEDEYRAFQEEAKKQIEDLNMTLEKLRSDLDEKETERSDMKETIFELEDEVEQHRAVKLHDNLIISDLENTVKKLQDQKHDMEREIKTLHRRLREESAEWRQFQADLQTAVVIANDIKSEAQEEIGDLKRRLHEAQEKNEKLTKELEEIKSRKQEEERGRVYNYMNAVERDLAALRQGMGLSRRSSTSSEPTPTVKTLIKSFDSASQVPNPAAAAIPRTPLSPSPMKTPPAAAVSPMQRHSISGPISTSKPLTALSDKRPNYGEIPVQEHLLRTSSASRPASLPRVPAMESAKTLSVSRRSSEEVKRDISAQEGASPASLMAMGTTSPQLSLSSSPTASVTPTTRSRIREERKDPLSALAREYGGSKRNALLKWCQKKTEGYQNIDITNFSSSWNDGLAFCALLHTYLPAHIPYQELNSQDKRRNFMLAFQAAESVGIKSTLDINEMVRTERPDWQNVMLYVTAIYKYFET.

3 disordered regions span residues 1–176 (MKKA…NQIS), 293–323 (SLSPEITPGNQSDGGGTLTSSVEGSAPGSVE), and 358–390 (SSDDALDAPSSSESEGIPSIERSRKGSSGNASE). The span at 45–90 (TAASLSKTKSSDDLLAGMAGGVTVTNGVKGKKSTCPSAAPSASAPA) shows a compositional bias: low complexity. The span at 93–117 (TVENKSKISTGTASSTKRSTSTGNK) shows a compositional bias: polar residues. Composition is skewed to basic and acidic residues over residues 120–131 (SSTRERLRERTR) and 158–171 (TATECDVRMSKSKS). Positions 168 to 280 (KSKSDNQISD…LNALGFSLEQ (113 aa)) form a coiled coil. The span at 293–303 (SLSPEITPGNQ) shows a compositional bias: polar residues. The segment covering 358 to 377 (SSDDALDAPSSSESEGIPSI) has biased composition (low complexity). Residues serine 384, serine 385, and serine 389 each carry the phosphoserine modification. 2 coiled-coil regions span residues 394–449 (ACLT…MESL) and 487–807 (RYME…RGRV). 3 positions are modified to phosphoserine: serine 868, serine 881, and serine 887. The tract at residues 920-997 (TSSASRPASL…PTTRSRIREE (78 aa)) is disordered. Positions 946–956 (RSSEEVKRDIS) are enriched in basic and acidic residues. The span at 971–990 (TTSPQLSLSSSPTASVTPTT) shows a compositional bias: low complexity. The Calponin-homology (CH) domain maps to 1011–1116 (GSKRNALLKW…YVTAIYKYFE (106 aa)).

Belongs to the cytospin-A family. In terms of assembly, may interact with both microtubules and actin cytoskeleton.

Its subcellular location is the cytoplasm. It localises to the cytoskeleton. It is found in the spindle. The protein localises to the cell junction. The protein resides in the gap junction. Its function is as follows. Involved in cytokinesis and spindle organization. May play a role in actin cytoskeleton organization and microtubule stabilization and hence required for proper cell adhesion and migration. This is Cytospin-A (SPECC1L) from Homo sapiens (Human).